We begin with the raw amino-acid sequence, 432 residues long: Pachytene checkpoint protein 2 homolog (432 aa).

An N-acetylmethionine modification is found at Met1. 179–186 (GPPGTGKT) lines the ATP pocket.

This sequence belongs to the AAA ATPase family. PCH2 subfamily. Specifically interacts with the ligand binding domain of the thyroid receptor (TR). This interaction does not require the presence of thyroid hormone for its interaction. Interacts with proteasome subunit PSMA8; to participate in meiosis progression during spermatogenesis.

Functionally, plays a key role in chromosome recombination and chromosome structure development during meiosis. Required at early steps in meiotic recombination that leads to non-crossovers pathways. Also needed for efficient completion of homologous synapsis by influencing crossover distribution along the chromosomes affecting both crossovers and non-crossovers pathways. Also required for development of higher-order chromosome structures and is needed for synaptonemal-complex formation. In males, required for efficient synapsis of the sex chromosomes and for sex body formation. Promotes early steps of the DNA double-strand breaks (DSBs) repair process upstream of the assembly of RAD51 complexes. Required for depletion of HORMAD1 and HORMAD2 from synapsed chromosomes. The polypeptide is Pachytene checkpoint protein 2 homolog (TRIP13) (Canis lupus familiaris (Dog)).